We begin with the raw amino-acid sequence, 338 residues long: Egl nine homolog 1 (338 aa).

Positions 1–11 are enriched in low complexity; it reads PRAQPAPAQPR. Residues 1–99 are disordered; sequence PRAQPAPAQP…PSGGLRPNGQ (99 aa). A Phosphoserine modification is found at Ser-52. S-nitrosocysteine is present on residues Cys-116 and Cys-123. The tract at residues 156 to 166 is beta(2)beta(3) 'finger-like' loop; that stretch reads VSQKSDSSKDI. The Fe2OG dioxygenase domain maps to 209–307; that stretch reads GRTKAMVACY…RYAITVWYFD (99 aa). Cys-217 is subject to S-nitrosocysteine. His-228 and Asp-230 together coordinate Fe cation. 2 positions are modified to S-nitrosocysteine: Cys-238 and Cys-241. His-289 is a Fe cation binding site. Position 298 (Arg-298) interacts with 2-oxoglutarate.

Monomer. Interacts with ING4; the interaction inhibits the hydroxylation of HIF alpha proteins. Interacts with PTGES3 (via PXLE motif); thereby recruiting EGLN1 to the HSP90 pathway to facilitate HIF alpha proteins hydroxylation. Interacts with LIMD1. Found in a complex composed of LIMD1, VHL, EGLN1/PHD2, ELOB and CUL2. Interacts with EPAS1. Interacts with CBFA2T3 and HIF1A. The cofactor is Fe(2+). L-ascorbate is required as a cofactor. S-nitrosylation inhibits the enzyme activity up to 60% under aerobic conditions. Chelation of Fe(2+) has no effect on the S-nitrosylation. It is uncertain whether nitrosylation occurs on Cys-238 or Cys-241. As to expression, expressed in heart, liver, kidney, brain, liver and testis. Highest levels in heart, lowest in liver.

It is found in the cytoplasm. It localises to the nucleus. The catalysed reaction is L-prolyl-[hypoxia-inducible factor alpha subunit] + 2-oxoglutarate + O2 = trans-4-hydroxy-L-prolyl-[hypoxia-inducible factor alpha subunit] + succinate + CO2. With respect to regulation, increased activation in hypoxia. Hydroxylation of the C-terminal ODD domain (CODD) proline of HIF1A is activated by cyclosporin A (CsA). In terms of biological role, cellular oxygen sensor that catalyzes, under normoxic conditions, the post-translational formation of 4-hydroxyproline in hypoxia-inducible factor (HIF) alpha proteins. Hydroxylates a specific proline found in each of the oxygen-dependent degradation (ODD) domains (N-terminal, NODD, and C-terminal, CODD) of HIF1A. Also hydroxylates HIF2A. Has a preference for the CODD site for both HIF1A and HIF1B. Hydroxylated HIFs are then targeted for proteasomal degradation via the von Hippel-Lindau ubiquitination complex. Under hypoxic conditions, the hydroxylation reaction is attenuated allowing HIFs to escape degradation resulting in their translocation to the nucleus, heterodimerization with HIF1B, and increased expression of hypoxy-inducible genes. EGLN1 is the most important isozyme under normoxia and, through regulating the stability of HIF1, involved in various hypoxia-influenced processes such as angiogenesis in retinal and cardiac functionality. Target proteins are preferentially recognized via a LXXLAP motif. The polypeptide is Egl nine homolog 1 (Egln1) (Rattus norvegicus (Rat)).